The following is a 236-amino-acid chain: Uridylate kinase (236 aa).

10-11 (GS) serves as a coordination point for ATP. Gly44 contacts UMP. 2 residues coordinate ATP: Gly45 and Arg49. Residues Asp66 and 114 to 120 (ITPGQTT) contribute to the UMP site. Residues Thr140, Tyr146, and Asp149 each coordinate ATP.

Belongs to the UMP kinase family. In terms of assembly, homohexamer.

The protein resides in the cytoplasm. It carries out the reaction UMP + ATP = UDP + ADP. Its pathway is pyrimidine metabolism; CTP biosynthesis via de novo pathway; UDP from UMP (UMPK route): step 1/1. Inhibited by UTP. Catalyzes the reversible phosphorylation of UMP to UDP. The sequence is that of Uridylate kinase from Methanospirillum hungatei JF-1 (strain ATCC 27890 / DSM 864 / NBRC 100397 / JF-1).